A 513-amino-acid chain; its full sequence is Maturase K (513 aa).

It belongs to the intron maturase 2 family. MatK subfamily.

It localises to the plastid. It is found in the chloroplast. Functionally, usually encoded in the trnK tRNA gene intron. Probably assists in splicing its own and other chloroplast group II introns. The polypeptide is Maturase K (Phaseolus vulgaris (Kidney bean)).